A 229-amino-acid chain; its full sequence is Beta-nerve growth factor (229 aa).

An N-terminal signal peptide occupies residues 1-6; it reads LIGIQA. The propeptide occupies 7–109; the sequence is EPHTESNVPA…SFNRTHRSKR (103 aa). Residues asparagine 57, asparagine 102, and asparagine 154 are each glycosylated (N-linked (GlcNAc...) asparagine). The segment at 77–112 is disordered; it reads FSTQPPPVAADTQDPDLEASGAASFNRTHRSKRSSS. 3 disulfides stabilise this stretch: cysteine 124–cysteine 189, cysteine 167–cysteine 217, and cysteine 177–cysteine 219. Tyrosine 161 and lysine 197 together coordinate a 1-acyl-sn-glycero-3-phospho-(1D-myo-inositol). Lysine 197 provides a ligand contact to a 1-acyl-sn-glycero-3-phospho-L-serine.

This sequence belongs to the NGF-beta family. Homodimer. The homodimer interacts with a single NTRK1 chain. The homodimer interacts with a single NGFR chain. The NGF dimer interacts with a single SORCS2 chain (via extracellular domain). The NGF precursor (proNGF) binds to a receptor complex formed by SORT1 and NGFR, which leads to NGF endocytosis. Both mature NGF and the immature NGF precursor (proNGF) interact with SORCS2 and with the heterodimer formed by SORCS2 and NGFR (via extracellular domains). The NGF precursor (proNGF) has much higher affinity for SORCS2 than mature NGF. The NGF precursor (proNGF) has much higher affinity for SORT1 than mature NGF. Interacts with ADAM10 in a divalent cation-dependent manner. Interacts with SORCS3.

It localises to the secreted. The protein resides in the endosome lumen. Its function is as follows. Nerve growth factor is important for the development and maintenance of the sympathetic and sensory nervous systems. Extracellular ligand for the NTRK1 and NGFR receptors, activates cellular signaling cascades to regulate neuronal proliferation, differentiation and survival. The immature NGF precursor (proNGF) functions as a ligand for the heterodimeric receptor formed by SORCS2 and NGFR, and activates cellular signaling cascades that lead to inactivation of RAC1 and/or RAC2, reorganization of the actin cytoskeleton and neuronal growth cone collapse. In contrast to mature NGF, the precursor form (proNGF) promotes neuronal apoptosis (in vitro). Inhibits metalloproteinase-dependent proteolysis of platelet glycoprotein VI. Binds lysophosphatidylinositol and lysophosphatidylserine between the two chains of the homodimer. The lipid-bound form promotes histamine relase from mast cells, contrary to the lipid-free form. In Sus scrofa (Pig), this protein is Beta-nerve growth factor (NGF).